A 556-amino-acid chain; its full sequence is Sphingomyelinase C (556 aa).

A signal peptide spans 1–27; it reads MRIKKYTKVRLLVNCCLLLFFLIDCGA.

Its subcellular location is the secreted. The catalysed reaction is a sphingomyelin + H2O = phosphocholine + an N-acylsphing-4-enine + H(+). The chain is Sphingomyelinase C (sph) from Leptospira interrogans.